We begin with the raw amino-acid sequence, 300 residues long: Rhodopsin (300 aa).

The Extracellular portion of the chain corresponds to 1-18 (LHMIHLHWYQYPPMNPMM). The chain crosses the membrane as a helical span at residues 19 to 43 (YPLLLVFMLITGILCLAGNFVTIWV). The Cytoplasmic portion of the chain corresponds to 44–55 (FMNTKSLRTPAN). Residues 56–78 (LLVVNLAMSDFLMMFTMFPPMMV) form a helical membrane-spanning segment. The Extracellular segment spans residues 79–92 (TCYYHTWTLGATFC). Residues Cys92 and Cys168 are joined by a disulfide bond. Residues 93–115 (QVYAFLGNLCGCASIWTMVFITF) form a helical membrane-spanning segment. The 'Ionic lock' involved in activated form stabilization signature appears at 116-118 (DRY). Residues 116-134 (DRYNVIVKGVAGEPLSTKK) are Cytoplasmic-facing. The chain crosses the membrane as a helical span at residues 135 to 155 (ASLWILTIWILSITWCIAPFF). At 156-181 (GWNRYVPEGNTGCGTDYLSEDILSRS) the chain is on the extracellular side. The chain crosses the membrane as a helical span at residues 182–203 (YLYIYSTWVYFLPLAITIYCHV). Over 204-244 (FIIKAVAAHEKGMRDQAKKMGIKSLRNEEAQKTSAECRLAK) the chain is Cytoplasmic. The chain crosses the membrane as a helical span at residues 245-266 (IAMTTVALWFIAWTPYLLINWV). At 267–277 (GMFARSYLSPV) the chain is on the extracellular side. Residues 278–299 (YTIWGYVFAKANAVYNPIVYAI) form a helical membrane-spanning segment. N6-(retinylidene)lysine is present on Lys287.

This sequence belongs to the G-protein coupled receptor 1 family. Opsin subfamily. As to quaternary structure, homodimer. Interacts with GNAQ. Contains one covalently linked retinal chromophore.

It is found in the cell projection. The protein resides in the rhabdomere membrane. Functionally, photoreceptor required for image-forming vision at low light intensity. Can use both retinal and 3-dehydroretinal as visual pigment. Light-induced isomerization of 11-cis to all-trans retinal triggers a conformational change that activates signaling via G-proteins. Signaling via GNAQ probably mediates the activation of phospholipase C. This chain is Rhodopsin (RHO), found in Cambarus maculatus (Freckled crayfish).